Reading from the N-terminus, the 488-residue chain is MRILKSHPLLKIVNSYIIDSPQPANLSYLWNFGSLLALCLGIQIVTGVTLAMHYTPSVSEAFNSVEHIMRDVNNGWLVRYLHSNTASAFFFLVYLHIGRGLYYGSYKTPRTLTWAIGTVILIVMMATAFLGYVLPYGQMSLWGATVITNLMSAIPWIGQDIVEFIWGGLYTDEPQCGDVLLKILLNAGKSPILGFAYDLFFIIVLLIGVKIAMTRGKSAGVRSLHTSEASQRLHAGDLTYAYLVGLFEGDGYFSITKKGKYLTYELGIELSIKDVQLIYKIKKILGIGIVSFRKINEIEMVALRIRDKNHLKSFILPIFEKYPMFSNKQYDYLRFRNALLSGIISLEDLPDYTRSDEPLNSIESIINTSYFSAWLVGFIEAEGCFSVYKLNKDDDYLIASFDIAQRDGDILISAIRKYLSFTTKVYLDKTNCSKLKVTSVRSVENIIKFLQNAPVKLLGNKKLQYLLWLKQLRKISRYSEKIKIPSNY.

Positions 1–169 (MRILKSHPLL…DIVEFIWGGL (169 aa)) are cobA exon 1 encoded. A cobA intron encoded region spans residues 170–488 (YTDEPQCGDV…SEKIKIPSNY (319 aa)).

It in the C-terminal section; belongs to the LAGLIDADG endonuclease family. In terms of assembly, homodimer. The cofactor is Mg(2+). In terms of processing, the mature protein may arise from proteolytic cleavage of an in-frame translation of cobA exon 1 plus intron, containing the I-AniI open reading frame. Cleavage may take place close to Met-213 resulting in an active endonuclease/maturase of about 30 kDa.

The protein localises to the mitochondrion. In terms of biological role, mitochondrial DNA endonuclease and mRNA maturase involved in intron homing and required for splicing of the cytochrome b (cobA) gene intron, containing its own coding sequence. The protein stimulates the intrinsic ribozyme activity of the intron through binding to and stabilizing specific secondary and tertiary structure elements in the RNA. As an endonuclease it introduces a specific double-strand break at the junction of the two exons the cobA gene and thus mediates the insertion of an intron, containing its own coding sequence (group I intron), into an intronless gene. Recognizes with limited specificity and cleaves the sequence 5'-GAGGAGGTTTCTCTGTA-3'. The proteins RNA and DNA recognition and binding surfaces are independent. In Emericella nidulans (Aspergillus nidulans), this protein is Intron-encoded DNA endonuclease I-AniI (I-AniI).